Reading from the N-terminus, the 192-residue chain is UPF0312 protein Spro_1887 (192 aa).

An N-terminal signal peptide occupies residues 1 to 23 (MLKKTVLGLTAGAMLLSAGSALA).

The protein belongs to the UPF0312 family. Type 1 subfamily.

It is found in the periplasm. In Serratia proteamaculans (strain 568), this protein is UPF0312 protein Spro_1887.